The sequence spans 70 residues: Kappa-scoloptoxin(07)-Ssm2b (70 aa).

The N-terminal stretch at 1–19 (MLVFYALLFVSVFSSTVMG) is a signal peptide. Positions 20–39 (ATIDKPILREAIEEIDVNKR) are excised as a propeptide.

The protein belongs to the scoloptoxin-07 family. In terms of processing, contains 3 disulfide bonds. In terms of tissue distribution, expressed by the venom gland.

The protein resides in the secreted. In terms of biological role, inhibits voltage-gated potassium channels. The protein is Kappa-scoloptoxin(07)-Ssm2b of Scolopendra mutilans (Chinese red-headed centipede).